A 385-amino-acid polypeptide reads, in one-letter code: Trans-enoyl reductase poxH (385 aa).

64-67 (QPYS) lines the NADP(+) pocket. Substrate is bound at residue 156–163 (PDPAAPPI). Residues 199–202 (STSV), 223–226 (SGTD), tyrosine 241, and 289–290 (LG) each bind NADP(+). Substrate is bound at residue 309 to 313 (HMAPL). 372–373 (KR) lines the NADP(+) pocket.

It belongs to the zinc-containing alcohol dehydrogenase family. In terms of assembly, monomer.

The protein operates within secondary metabolite biosynthesis. Its function is as follows. Trans-enoyl reductase; part of the gene cluster that mediates the biosynthesis of oxaleimides, cytotoxic compounds containing an unusual disubstituted succinimide moiety. The first step of the pathway is provided by the HR-PKS poxF that serves in a new mode of collaborative biosynthesis with the PKS-NRPS poxE, by providing the olefin containing amino acid substrate via the synthesis of an ACP-bound dec-4-enoate. The cytochrome P450 monooxygenase poxM-catalyzed oxidation at the alpha-position creates the enzyme-bound 2-hydroxydec-4-enoyl-ACP thioester, which may be prone to spontaneous hydrolysis to yield 2-hydroxydec-4-enoic acid due to increased electrophilicity of the carbonyl. 2-hydroxydec-4-enoic acid can then be further oxidized by poxM to yield the alpha-ketoacid 2-oxodec-4-enoicacid, which is reductively aminated by the aminotransferase poxL to yield (S,E)-2-aminodec-4-enoic acid. The Hybrid PKS-NRPS synthetase poxE then performs condensation between the octaketide product of its PKS modules and the amino group of (S,E)-2-aminodec-4-enoic acid which is activated and incorporated by the adenylation domain. The resulting aminoacyl product can be cyclized by the Diels-Alderase PoxQ and reductively released by the reductive (R) domain of poxE to yield an aldehyde intermediate. The released aldehyde is then substrate for a Knoevenagel condensation by the hydrolyase poxO followed by an oxidation at the 5-position of the pyrrolidone ring. The presence of the olefin from the amino acid building block allows for migration of the substituted allyl group to occur. This allylic transposition reaction takes place in a conjugate addition, semipinacol-like fashion to yield a succinimide intermediate. Iterative two-electron oxidations of the C7 methyl of the succinimide intermediate to the carboxylic acid can be catalyzed by one of two remaining cytochrome P450 monooxygenasess poxC or poxD to yield oxaleimide A. Subsequent oxidation yields the maleimide scaffold oxaleimide I. Both oxaleimide A and oxaleimide I can undergo oxidative modifications in the decalin ring to yield the series of products oxaleimides B to H. This is Trans-enoyl reductase poxH from Penicillium oxalicum.